The primary structure comprises 544 residues: Aspartokinase (544 aa).

Positions 463–535 constitute an ACT domain; it reads LVGKQMVNFI…SAIGDSSAVD (73 aa).

The protein belongs to the aspartokinase family.

The enzyme catalyses L-aspartate + ATP = 4-phospho-L-aspartate + ADP. Its pathway is amino-acid biosynthesis; L-methionine biosynthesis via de novo pathway; L-homoserine from L-aspartate: step 1/3. The protein operates within amino-acid biosynthesis; L-threonine biosynthesis; L-threonine from L-aspartate: step 1/5. Its function is as follows. Phosphorylates aspartate, the first step in the biosynthesis of amino acids that derive from aspartate (the aspartate family of amino acids), including methioinine and threonine, the latter of which is a precursor to isoleucine. In Candida albicans (strain SC5314 / ATCC MYA-2876) (Yeast), this protein is Aspartokinase.